A 728-amino-acid polypeptide reads, in one-letter code: MDKTHSSQGKCPVMHGGNTSVTTNNMDWWPKALNLDILHQHDKKTDPMDPTFNYSEAFKTLDLAAVKQDLYALMTDSQDWWPADWGHYGGLMIRMAWHSAGTYRIADGRGGAGTGNQRFAPLNSWPDNANLDKARRLLWPIKKKYGNKLSWADLIILAGNVAYESMGLKTYGFAGGRADIWHPEKDIYWGSEKQWLAPSDNPNSRYSGERDLENPLAAVMMGLIYVNPEGVDGNPDPLRTAQDIRITFARMAMDDEETVALTAGGHTVGKCHGNGKAQNLGPEPEAEDVEAQGLGWLNKHGRGVGRNTVTSGIEGAWTTHPTQWDNGYFSLLLGYDWELKKSPAGAWQWEPINIKEEDKPVDVEDPTIRHNPIMTDADMAMKMDPEYRKISEKFYKDPAYFSEVFARAWFKLTHRDLGPKSRYLGPEVPAEDLIWQDPIPQVDYRLSDDDITALKAKILASGLSIAELVTTAWDSARTFRGSDYRGGANGARIRLAPQKDWEGNEPVRLQKVLKVLTDIQTGLSQKVSIADLIVLGGTAAVEKAAQDAGVNIRVPFASGRGDASQEMTDIESFAVLEPLHDAYRNWQKKDYVVQPEELMLDRTQLMGLTAHEMTVLIGGMRVLGANYAGSAHGVFTDRVGVLSNDFFVNLTDMSYNWKPAGNNLYQIIERKTGTVKWTATRVDLVFGSNSVLRSYAEIYAQDDAKEKFVHDFVNAWTKVMNADRFDLA.

A cross-link (tryptophyl-tyrosyl-methioninium (Trp-Tyr) (with M-251)) is located at residues 97-225 (WHSAGTYRIA…LAAVMMGLIY (129 aa)). The active-site Proton acceptor is histidine 98. Positions 225 to 251 (YVNPEGVDGNPDPLRTAQDIRITFARM) form a cross-link, tryptophyl-tyrosyl-methioninium (Tyr-Met) (with W-97). Histidine 266 is a heme b binding site.

The protein belongs to the peroxidase family. Peroxidase/catalase subfamily. As to quaternary structure, homodimer or homotetramer. The cofactor is heme b. In terms of processing, formation of the three residue Trp-Tyr-Met cross-link is important for the catalase, but not the peroxidase activity of the enzyme.

The catalysed reaction is H2O2 + AH2 = A + 2 H2O. It catalyses the reaction 2 H2O2 = O2 + 2 H2O. In terms of biological role, bifunctional enzyme with both catalase and broad-spectrum peroxidase activity. The chain is Catalase-peroxidase from Shewanella putrefaciens (strain CN-32 / ATCC BAA-453).